Here is a 246-residue protein sequence, read N- to C-terminus: Exosome complex component SKI6 (246 aa).

Belongs to the RNase PH family. In terms of assembly, component of the RNA exosome complex. Specifically part of the catalytically inactive RNA exosome core complex (Exo-9) which may associate with the catalytic subunits RRP6 and DIS3 in cytoplasmic- and nuclear-specific RNA exosome complex forms. Exo-9 is formed by a hexameric base ring of RNase PH domain-containing subunits and a cap ring consisting of CSL4, RRP4 and RRP40.

Its subcellular location is the cytoplasm. It localises to the nucleus. The protein localises to the nucleolus. Non-catalytic component of the RNA exosome complex which has 3'-&gt;5' exoribonuclease activity and participates in a multitude of cellular RNA processing and degradation events. In the nucleus, the RNA exosome complex is involved in proper maturation of stable RNA species such as rRNA, snRNA and snoRNA, in the elimination of RNA processing by-products and non-coding 'pervasive' transcripts, such as antisense RNA species and cryptic unstable transcripts (CUTs), and of mRNAs with processing defects, thereby limiting or excluding their export to the cytoplasm. In the cytoplasm, the RNA exosome complex is involved in general mRNA turnover and in RNA surveillance pathways, preventing translation of aberrant mRNAs. The catalytic inactive RNA exosome core complex of 9 subunits (Exo-9) is proposed to play a pivotal role in the binding and presentation of RNA for ribonucleolysis, and to serve as a scaffold for the association with catalytic subunits and accessory proteins or complexes. SKI6 is part of the hexameric ring of RNase PH domain-containing subunits proposed to form a central channel which threads RNA substrates for degradation. The polypeptide is Exosome complex component SKI6 (SKI6) (Saccharomyces cerevisiae (strain ATCC 204508 / S288c) (Baker's yeast)).